Consider the following 301-residue polypeptide: Ubiquitin thioesterase OTU1 (301 aa).

The UBX-like stretch occupies residues 5-83; it reads RCKAKNGTHL…IVEEEKNKPK (79 aa). In terms of domain architecture, OTU spans 102–227; it reads VERRVVPADN…GIHYDPLQKV (126 aa). The cys-loop stretch occupies residues 107 to 113; the sequence is VPADNSC. Residue D110 is part of the active site. C113 serves as the catalytic Nucleophile. Residues 166-176 are variable-loop; the sequence is IRRDDTWGGAI. The his-loop stretch occupies residues 216-220; sequence YDGIH. I219 lines the substrate pocket. H220 is an active-site residue. Positions 244–249 are S2 site; it reads DVILAQ. The segment at 271–295 adopts a C2H2-type zinc-finger fold; it reads LRCMVCQTGLVGQKEAREHAKETGH. H295 is an active-site residue.

The protein resides in the cytoplasm. The enzyme catalyses Thiol-dependent hydrolysis of ester, thioester, amide, peptide and isopeptide bonds formed by the C-terminal Gly of ubiquitin (a 76-residue protein attached to proteins as an intracellular targeting signal).. Hydrolase that can remove conjugated ubiquitin from proteins and participates in endoplasmic reticulum-associated degradation (ERAD) for misfolded lumenal proteins. May act by triming the ubiquitin chain on the associated substrate to facilitate their threading through the VCP/p97 pore. Ubiquitin moieties on substrates may present a steric impediment to the threading process when the substrate is transferred to the VCP pore and threaded through VCP's axial channel. Mediates deubiquitination of 'Lys-27'-, 'Lys-29'- and 'Lys-33'-linked polyubiquitin chains. Also able to hydrolyze 'Lys-11'-linked ubiquitin chains. Cleaves both polyubiquitin and di-ubiquitin. This is Ubiquitin thioesterase OTU1 (yod1) from Danio rerio (Zebrafish).